Here is a 311-residue protein sequence, read N- to C-terminus: Ornithine carbamoyltransferase (311 aa).

Carbamoyl phosphate contacts are provided by residues Gln85, Arg109, and 136–139; that span reads HPCQ. L-ornithine-binding positions include Asn167, Asp231, and 235–236; that span reads SM. Residues 271–272 and Arg299 contribute to the carbamoyl phosphate site; that span reads CL.

It belongs to the aspartate/ornithine carbamoyltransferase superfamily. OTCase family.

It is found in the cytoplasm. The catalysed reaction is carbamoyl phosphate + L-ornithine = L-citrulline + phosphate + H(+). It participates in amino-acid biosynthesis; L-arginine biosynthesis; L-arginine from L-ornithine and carbamoyl phosphate: step 1/3. Its function is as follows. Reversibly catalyzes the transfer of the carbamoyl group from carbamoyl phosphate (CP) to the N(epsilon) atom of ornithine (ORN) to produce L-citrulline. This chain is Ornithine carbamoyltransferase (argF), found in Geobacillus stearothermophilus (Bacillus stearothermophilus).